Reading from the N-terminus, the 606-residue chain is Preterminal protein (606 aa).

A Nuclear localization signal motif is present at residues 320–329 (RLPVRRRRRR). Ser515 is modified (O-(5'-phospho-DNA)-serine). The disordered stretch occupies residues 573 to 606 (HLPLPERQADIPLPPLPAGPEPPLPPGARPRRRF). A compositionally biased stretch (pro residues) spans 584–600 (PLPPLPAGPEPPLPPGA).

Belongs to the adenoviridae terminal protein family. In terms of assembly, heterodimer with the polymerase; this heterodimer binds to bp 9 to 18 of the genome. Interacts with host POU2F1; POU2F1 binds to the auxiliary sequences in the inverted terminal repeats and tethers the pTP-POL heterodimer to the origin DNA thereby participating in the assembly of the pre-initiation complex (POL-TP-DBP-NFIA-POU2F1). Post-translationally, preterminal protein is used to replicate viral genome, upon genomic encapsidation it is processed first into iTP and finally into TP by adenovirus protease.

The protein resides in the host nucleus matrix. Its function is as follows. Protein covalently bound to the viral DNA that acts as a primer for viral genomic replication by DNA strand displacement. Assembles on the viral origin of replication in an initiation complex with viral polymerase, DBP, host NFIA and host POU2F1/OCT1. During initiation, the polymerase covalently couples the first dCTP with Ser-580 of pTP. The terminal protein stimulates the template activity over 20 fold compared to protein-free templates. Neo-synthesized viral genomes are linked to two preterminal proteins, one for each 5' end. These new genomes are encapsidated in the nucleus, and during capsid maturation by viral protease, preterminal protein is first cleaved into intermediary (iTP), then into mature TP. May play a role in host nuclear matrix localization of genomic DNA. The chain is Preterminal protein from Human adenovirus A serotype 12 (HAdV-12).